A 251-amino-acid polypeptide reads, in one-letter code: Cell division protein ZapD (251 aa).

Belongs to the ZapD family. As to quaternary structure, interacts with FtsZ.

It is found in the cytoplasm. In terms of biological role, cell division factor that enhances FtsZ-ring assembly. Directly interacts with FtsZ and promotes bundling of FtsZ protofilaments, with a reduction in FtsZ GTPase activity. This is Cell division protein ZapD from Janthinobacterium sp. (strain Marseille) (Minibacterium massiliensis).